Consider the following 329-residue polypeptide: UDP-N-acetylenolpyruvoylglucosamine reductase (329 aa).

One can recognise an FAD-binding PCMH-type domain in the interval 28–192 (RVGGPADLLC…ARVEVRLRPG (165 aa)). Arginine 172 is a catalytic residue. Residues 204–225 (DRERRRATQPLDRPTFGSTFTN) are disordered. Catalysis depends on serine 221, which acts as the Proton donor. Glutamate 291 is a catalytic residue. The interval 303-329 (LAGLDGHAADGGGPGAASGGARPREAT) is disordered. Positions 311-320 (ADGGGPGAAS) are enriched in gly residues.

Belongs to the MurB family. FAD serves as cofactor.

The protein resides in the cytoplasm. It carries out the reaction UDP-N-acetyl-alpha-D-muramate + NADP(+) = UDP-N-acetyl-3-O-(1-carboxyvinyl)-alpha-D-glucosamine + NADPH + H(+). Its pathway is cell wall biogenesis; peptidoglycan biosynthesis. In terms of biological role, cell wall formation. This is UDP-N-acetylenolpyruvoylglucosamine reductase from Anaeromyxobacter dehalogenans (strain 2CP-C).